A 405-amino-acid polypeptide reads, in one-letter code: MADPKYADLPGIARNEPDVYETSDLPEDDQAEFDAELEELTSTSVEHIIVNPNAAYDKFKDKRVGTKGLDFSDRIGKTKRTGYESGEYEMLGEGLGVKETPQQKYQRLLHEVQELTTEVEKIKMTVKESATEEKLTPVVLAKQLAALKQQLVASHLEKLLGPDAAINLTDPDGALAKRLLLQLEATKNTKGAGSGGKTTSGSPPDSSLVTYELHSRPEQDKFSQAAKVAELEKRLTELEATVRCDQDAQNPLSAGLQGACLMETVELLQAKVSALDLAVLDQVEARLQSVLGKVNEIAKHKASVEDADTQSKVHQLYETIQRWSPIASTLPELVQRLVTIKQLHEQAMQFGQLLTHLDTTQQMIACSLKDNATLLTQVQTTMRENLSTVEGNFANIDERMKKLGK.

The tract at residues 1 to 25 is disordered; sequence MADPKYADLPGIARNEPDVYETSDL. A2 carries the N-acetylalanine modification. Residue Y6 is modified to Phosphotyrosine. Position 85 is a phosphoserine (S85). Residue Y88 is modified to Phosphotyrosine. The stretch at 105–132 forms a coiled coil; the sequence is YQRLLHEVQELTTEVEKIKMTVKESATE. Position 136 is a phosphothreonine (T136). The disordered stretch occupies residues 187–207; it reads KNTKGAGSGGKTTSGSPPDSS. The residue at position 324 (S324) is a Phosphoserine.

The protein belongs to the dynactin subunit 2 family. In terms of assembly, subunit of dynactin, a multiprotein complex part of a tripartite complex with dynein and a adapter, such as BICDL1, BICD2 or HOOK3. The dynactin complex is built around ACTR1A/ACTB filament and consists of an actin-related filament composed of a shoulder domain, a pointed end and a barbed end. Its length is defined by its flexible shoulder domain. The soulder is composed of 2 DCTN1 subunits, 4 DCTN2 and 2 DCTN3. The 4 DCNT2 (via N-terminus) bind the ACTR1A filament and act as molecular rulers to determine the length. The pointed end is important for binding dynein-dynactin cargo adapters and consists of 4 subunits: ACTR10, DCNT4, DCTN5 and DCTN6. The barbed end is composed of a CAPZA1:CAPZB heterodimers, which binds ACTR1A/ACTB filament and dynactin and stabilizes dynactin. Interacts with BICD2 and CEP135. Interacts with DYNAP. Interacts with ECPAS. Interacts with MAPRE1.

It is found in the cytoplasm. Its subcellular location is the cytoskeleton. The protein localises to the microtubule organizing center. The protein resides in the centrosome. It localises to the membrane. In terms of biological role, part of the dynactin complex that activates the molecular motor dynein for ultra-processive transport along microtubules. In the dynactin soulder domain, binds the ACTR1A filament and acts as a molecular ruler to determine the length. Modulates cytoplasmic dynein binding to an organelle, and plays a role in prometaphase chromosome alignment and spindle organization during mitosis. Involved in anchoring microtubules to centrosomes. May play a role in synapse formation during brain development. This chain is Dynactin subunit 2 (DCTN2), found in Sus scrofa (Pig).